A 340-amino-acid polypeptide reads, in one-letter code: Fructose-1,6-bisphosphatase, cytosolic (340 aa).

Mg(2+) is bound by residues Glu71, Glu100, Asp121, Leu123, and Asp124. Residues 124–127 (DGSS), Asn215, Tyr247, Tyr267, and Lys277 each bind substrate. Glu283 is a Mg(2+) binding site.

It belongs to the FBPase class 1 family. Requires Mg(2+) as cofactor.

It is found in the cytoplasm. It catalyses the reaction beta-D-fructose 1,6-bisphosphate + H2O = beta-D-fructose 6-phosphate + phosphate. In Solanum tuberosum (Potato), this protein is Fructose-1,6-bisphosphatase, cytosolic.